A 374-amino-acid polypeptide reads, in one-letter code: Envelope glycoprotein M (374 aa).

Residues 1 to 16 (MKSSKKDIFILHIWLK) lie on the Intravirion side of the membrane. The helical transmembrane segment at 17 to 37 (LMGCYVFMFITSVVLPIAAMF) threads the bilayer. Residues 38 to 82 (PNLGFPCYYNTLVDYSKLNLREKNQAQHLTPTLFLEAPEMFFYVT) lie on the Virion surface side of the membrane. A helical membrane pass occupies residues 83–103 (YSFIVDCCSLVYYALAAVAVV). The Intravirion portion of the chain corresponds to 104–117 (KAKKHAPGLMALSQ). Residues 118–138 (WIMAVGSPTLLYMAVLKLWTI) traverse the membrane as a helical segment. Residues 139 to 149 (QLYIHTLSYKH) lie on the Virion surface side of the membrane. The chain crosses the membrane as a helical span at residues 150–170 (IYLAAFVYCLHWLLSMVYTEC). Topologically, residues 171 to 207 (YITNVSSQWTSSELKKTIPENILLYRVVHVLKPIMMN) are intravirion. A helical transmembrane segment spans residues 208-228 (VHLSVVALETLIFCLSFMMAI). Residues 229–238 (GNSFYVMVSD) are Virion surface-facing. Residues 239-259 (IVFGAINLYLILPIIWYFVTE) traverse the membrane as a helical segment. Over 260 to 269 (FWLSKYLPRQ) the chain is Intravirion. The chain crosses the membrane as a helical span at residues 270 to 290 (FGFYFGVLVASIILILPVVRY). The Virion surface segment spans residues 291-301 (DKIFVAAQIHR). The helical transmembrane segment at 302–322 (AVSINIAMIPLCALVALLVRA) threads the bilayer. Over 323 to 374 (CRVYTDRKKIAYTALPSKPQTIKYTKPIEPSTKQAPDSSIFLEEESDTDFEQ) the chain is Intravirion. The interval 345–374 (KYTKPIEPSTKQAPDSSIFLEEESDTDFEQ) is disordered. The span at 364 to 374 (LEEESDTDFEQ) shows a compositional bias: acidic residues.

It belongs to the herpesviridae glycoprotein M family. In terms of assembly, interacts (via N-terminus) with gN (via N-terminus). The gM-gN heterodimer forms the gCII complex.

It localises to the virion membrane. The protein localises to the host Golgi apparatus. Its subcellular location is the host trans-Golgi network. The protein resides in the host endosome membrane. It is found in the host nucleus inner membrane. Functionally, envelope glycoprotein important for virion assembly and egress. Plays a role in the correct incorporation of gH-gL into virion membrane. Directs the glycoprotein N (gN) to the host trans-Golgi network. This is Envelope glycoprotein M from Connochaetes taurinus (Blue wildebeest).